We begin with the raw amino-acid sequence, 443 residues long: EGF-containing fibulin-like extracellular matrix protein 2 (443 aa).

The first 23 residues, M1–G23, serve as a signal peptide directing secretion. Positions Y36–L81 constitute an EGF-like 1; atypical domain. 18 disulfide bridges follow: C58–C121, C65–C80, C71–C109, C127–C140, C134–C149, C151–C162, C168–C177, C173–C186, C188–C201, C207–C217, C213–C226, C228–C241, C247–C258, C254–C267, C269–C281, C287–C300, C294–C309, and C315–C327. The EGF-like 2; calcium-binding domain occupies D123–V163. The EGF-like 3; calcium-binding domain maps to D164–V202. N-linked (GlcNAc...) asparagine glycosylation occurs at N198. The 40-residue stretch at D203–S242 folds into the EGF-like 4; calcium-binding domain. Residues D243–Q282 form the EGF-like 5; calcium-binding domain. The EGF-like 6; calcium-binding domain occupies D283–L328. N-linked (GlcNAc...) asparagine glycosylation is present at N394.

This sequence belongs to the fibulin family. In terms of assembly, homodimer; disulfide-linked. Multimer; allows heparin binding. Monomer. Interacts with FBN1 (via N-terminal domain); this interaction inhibits EFEMP2 binding to LOX and ELN. Interacts with LOX (via propeptide); this interaction is strong and facilitates formation of ternary complexes with ELN during elastic fiber assembly; this interaction limits interaction of EFEMP2 with FBLN5. Interacts with PITX2. Interacts with ELN with moderate affinity; this interaction regulates ELN self-assembly maturation stage. Interacts with FBLN5 with moderate affinity. Interacts with LOXL1 (via propeptide), LTBP1 and TGFB1 stronger than with LOXL2 and LTBP3. Interacts with PCOLCE. Interacts with collagen type IV trimer (COL4A1-COL4A1-COL4A2), NID2 and moderately with COL15A1-derived endostatin. Interacts with EMILIN1; this interaction promotes the incorporation of EFEMP2 into the extracellular matrix. Interacts with LTBP4; the LTBP4 long form (LTBP4L) has a stronger binding affinity than the LTBP4 short form and the LTBP4 long form promotes fibrillar deposition of EFEMP2. In terms of processing, N-glycosylated; contains mostly complex-type glycans. Not O-glycosylated. Post-translationally, cleaved by ELANE; produces a 50-55 kDa fragment. Cleaved by MMP2 and MMP9; produces several fragments.

The protein localises to the secreted. It is found in the extracellular space. It localises to the extracellular matrix. Its subcellular location is the basement membrane. In terms of biological role, plays a crucial role in elastic fiber formation in tissue, and in the formation of ultrastructural connections between elastic laminae and smooth muscle cells in the aorta, therefore participates in terminal differentiation and maturation of smooth muscle cell (SMC) and in the mechanical properties and wall integrity maintenance of the aorta. In addition, is involved in the control of collagen fibril assembly in tissue throught proteolytic activation of LOX leading to cross- linking of collagen and elastin. Also promotes ELN coacervation and participates in the deposition of ELN coacervates on to microfibrils but also regulates ELN cross- linking through LOX interaction. Moreover adheres to the cells through heparin binding in a calcium-dependent manner and regulates vascularlar smooth muscle cells proliferation through angiotensin signaling. The polypeptide is EGF-containing fibulin-like extracellular matrix protein 2 (Homo sapiens (Human)).